The chain runs to 594 residues: Alanine--tRNA ligase (594 aa).

Zn(2+) contacts are provided by His456, His460, Cys558, and His562.

The protein belongs to the class-II aminoacyl-tRNA synthetase family. Zn(2+) is required as a cofactor.

The protein resides in the cytoplasm. The catalysed reaction is tRNA(Ala) + L-alanine + ATP = L-alanyl-tRNA(Ala) + AMP + diphosphate. Catalyzes the attachment of alanine to tRNA(Ala) in a two-step reaction: alanine is first activated by ATP to form Ala-AMP and then transferred to the acceptor end of tRNA(Ala). Also edits incorrectly charged Ser-tRNA(Ala) and Gly-tRNA(Ala) via its editing domain. The polypeptide is Alanine--tRNA ligase (alaS) (Borreliella afzelii (strain PKo) (Borrelia afzelii)).